The following is a 424-amino-acid chain: Glutamate-1-semialdehyde 2,1-aminomutase (424 aa).

K258 is subject to N6-(pyridoxal phosphate)lysine.

Belongs to the class-III pyridoxal-phosphate-dependent aminotransferase family. HemL subfamily. Pyridoxal 5'-phosphate is required as a cofactor.

The protein localises to the cytoplasm. It carries out the reaction (S)-4-amino-5-oxopentanoate = 5-aminolevulinate. Its pathway is porphyrin-containing compound metabolism; protoporphyrin-IX biosynthesis; 5-aminolevulinate from L-glutamyl-tRNA(Glu): step 2/2. The polypeptide is Glutamate-1-semialdehyde 2,1-aminomutase (Pyrobaculum neutrophilum (strain DSM 2338 / JCM 9278 / NBRC 100436 / V24Sta) (Thermoproteus neutrophilus)).